A 602-amino-acid chain; its full sequence is 3-hydroxy-3-methylglutaryl-coenzyme A reductase 2 (602 aa).

A run of 2 helical transmembrane segments spans residues 44–67 (ASDALPLPLYLTTNGLFFTMFFSV) and 95–115 (AIVSLIASVIYLLGFFGIGFV). The interval 116–187 (QTFVSRGNND…PLITSASSGE (72 aa)) is linker. Asn-124 is a glycosylation site (N-linked (GlcNAc...) asparagine). The tract at residues 188-602 (DEEIIKSVVQ…STKDVTKASS (415 aa)) is catalytic. Glu-281 serves as the catalytic Charge relay system. Residue Asn-345 is glycosylated (N-linked (GlcNAc...) asparagine). Residue Lys-413 is the Charge relay system of the active site. Residue Asn-458 is glycosylated (N-linked (GlcNAc...) asparagine). Asp-489 functions as the Charge relay system in the catalytic mechanism. The active-site Proton donor is the His-587. An N-linked (GlcNAc...) asparagine glycan is attached at Asn-591.

This sequence belongs to the HMG-CoA reductase family.

It localises to the endoplasmic reticulum membrane. It carries out the reaction (R)-mevalonate + 2 NADP(+) + CoA = (3S)-3-hydroxy-3-methylglutaryl-CoA + 2 NADPH + 2 H(+). Its pathway is metabolic intermediate biosynthesis; (R)-mevalonate biosynthesis; (R)-mevalonate from acetyl-CoA: step 3/3. Its function is as follows. Catalyzes the synthesis of mevalonate. The specific precursor of all isoprenoid compounds present in plants. The chain is 3-hydroxy-3-methylglutaryl-coenzyme A reductase 2 (HMG2) from Solanum lycopersicum (Tomato).